We begin with the raw amino-acid sequence, 202 residues long: NADH dehydrogenase [ubiquinone] iron-sulfur protein 7, mitochondrial (202 aa).

A mitochondrion-targeting transit peptide spans 1–56 (MLRRTSFNFTGRAMISRGSPEWSHRLDLKKGKKTTMMHKLGTSKPNNALQYAQMTL). Residues C77, C78, C142, and C172 each contribute to the [4Fe-4S] cluster site.

The protein belongs to the complex I 20 kDa subunit family. As to quaternary structure, complex I is composed of 45 different subunits This is a component of the iron-sulfur (IP) fragment of the enzyme. It depends on [4Fe-4S] cluster as a cofactor.

Its subcellular location is the mitochondrion. It carries out the reaction a ubiquinone + NADH + 5 H(+)(in) = a ubiquinol + NAD(+) + 4 H(+)(out). Core subunit of the mitochondrial membrane respiratory chain NADH dehydrogenase (Complex I) that is believed to belong to the minimal assembly required for catalysis. Complex I functions in the transfer of electrons from NADH to the respiratory chain. The immediate electron acceptor for the enzyme is believed to be ubiquinone. This is NADH dehydrogenase [ubiquinone] iron-sulfur protein 7, mitochondrial (NDHK) from Trypanosoma brucei brucei.